Reading from the N-terminus, the 202-residue chain is N-(5'-phosphoribosyl)anthranilate isomerase (202 aa).

This sequence belongs to the TrpF family.

The enzyme catalyses N-(5-phospho-beta-D-ribosyl)anthranilate = 1-(2-carboxyphenylamino)-1-deoxy-D-ribulose 5-phosphate. The protein operates within amino-acid biosynthesis; L-tryptophan biosynthesis; L-tryptophan from chorismate: step 3/5. This Listeria monocytogenes serotype 4b (strain CLIP80459) protein is N-(5'-phosphoribosyl)anthranilate isomerase.